Here is a 299-residue protein sequence, read N- to C-terminus: Tricarboxylate transport protein (299 aa).

3 Solcar repeats span residues 10–97, 109–199, and 212–297; these read VDPL…IKDM, TRGV…IKTL, and LSSG…VLVM. 6 helical membrane-spanning segments follow: residues 16-36, 66-86, 113-133, 174-193, 215-235, and 272-291; these read FLAG…FEFA, IGSI…KAGI, IAGL…FEAI, GVLP…LGCY, GLTF…TMPL, and GATP…FTIY.

It belongs to the mitochondrial carrier (TC 2.A.29) family.

It is found in the mitochondrion inner membrane. Its function is as follows. Transport of citrate across inner mitochondrial membrane. This is Tricarboxylate transport protein (CTP1) from Saccharomyces cerevisiae (strain ATCC 204508 / S288c) (Baker's yeast).